Here is a 1276-residue protein sequence, read N- to C-terminus: Probable outer membrane protein pmp6 (1276 aa).

The N-terminal stretch at 1-23 (MKYSLPWLLTSSALVFSLHPLMA) is a signal peptide. An Autotransporter domain is found at 981–1276 (DAPSHPGIWI…NANCGTRYSF (296 aa)).

The protein belongs to the PMP outer membrane protein family.

It localises to the secreted. The protein resides in the cell wall. Its subcellular location is the cell outer membrane. This chain is Probable outer membrane protein pmp6 (pmp6), found in Chlamydia pneumoniae (Chlamydophila pneumoniae).